The following is a 44-amino-acid chain: Antimicrobial peptide 1b (44 aa).

In terms of domain architecture, Chitin-binding type-1 spans 1–42; that stretch reads AQKCGEQGRGAKCPNCLCCGRYGFCGSTPDYCGVGCQSQCRG. Disulfide bonds link Cys-4/Cys-19, Cys-13/Cys-25, Cys-16/Cys-43, Cys-18/Cys-32, and Cys-36/Cys-40.

Contains 5 disulfide bonds.

Functionally, binds chitin. Has antifungal activity against F.oxysporum 16/10 (IC(50)=4.1 uM) and B.sorokiniana 6/10 (IC(50)=2.7 uM). Inhibits germination of fungal spores. The sequence is that of Antimicrobial peptide 1b from Leymus arenarius (Lyme grass).